An 845-amino-acid polypeptide reads, in one-letter code: Beta-mannosidase B (845 aa).

Asn252 carries an N-linked (GlcNAc...) asparagine glycan. The Proton donor role is filled by Glu432. Asn717 and Asn723 each carry an N-linked (GlcNAc...) asparagine glycan.

The protein belongs to the glycosyl hydrolase 2 family. Beta-mannosidase B subfamily.

It catalyses the reaction Hydrolysis of terminal, non-reducing beta-D-mannose residues in beta-D-mannosides.. The protein operates within glycan metabolism; N-glycan degradation. Functionally, exoglycosidase that cleaves the single beta-linked mannose residue from the non-reducing end of beta-mannosidic oligosaccharides of various complexity and length. Prefers mannobiose over mannotriose and has no activity against polymeric mannan. Is also severely restricted by galactosyl substitutions at the +1 subsite. This Aspergillus fumigatus (strain ATCC MYA-4609 / CBS 101355 / FGSC A1100 / Af293) (Neosartorya fumigata) protein is Beta-mannosidase B (mndB).